Consider the following 900-residue polypeptide: Zinc finger protein 574 (900 aa).

C2H2-type zinc fingers lie at residues 16–38, 76–98, and 126–148; these read YVCS…QNSH, YQCL…QELH, and YECV…RQTH. Ser164 is subject to Phosphoserine. The C2H2-type 4 zinc finger occupies 213–235; the sequence is YKCSECSQLFQMPADFLEHQATH. Residues 244 to 254 are compositionally biased toward low complexity; that stretch reads AEPATQQETQV. The tract at residues 244 to 306 is disordered; sequence AEPATQQETQ…RRNNSGESGG (63 aa). A compositionally biased stretch (basic and acidic residues) spans 273 to 290; the sequence is HSYELRNELRNGEAIGRD. At Ser301 the chain carries Phosphoserine. C2H2-type zinc fingers lie at residues 312-334, 339-361, 367-389, 395-416, 469-492, 498-520, 526-548, 554-576, 582-604, and 610-633; these read LFCS…LRSH, FKCP…LGDH, FLCV…RRAH, HSCP…RRTH, YRCL…RFVH, HKCS…LRTH, FPCP…RLTH, YRCG…RLVH, YRCQ…RYHH, and YKCR…LVIH. The C2H2-type 15; degenerate zinc finger occupies 639–662; the sequence is YRCSSCGAAFPSSLRLREHRCAAA. The C2H2-type 16 zinc finger occupies 670 to 692; that stretch reads FECGTCGKKVGSAARLQAHEAAH. The segment at 690-741 is disordered; the sequence is AAHAAAGPGEVLAKEPPAPRASRATRTPVAPSPTALSGTTSAAPAAPARRRG. The residue at position 721 (Ser721) is a Phosphoserine. The span at 721–736 shows a compositional bias: low complexity; that stretch reads SPTALSGTTSAAPAAP. Residue Thr728 is modified to Phosphothreonine. 4 consecutive C2H2-type zinc fingers follow at residues 742 to 764, 770 to 792, 798 to 820, and 826 to 848; these read PECS…RRIH, YPCP…RRLH, FACE…RRIH, and YSCP…RKTH. Arg836 carries the post-translational modification Asymmetric dimethylarginine.

This sequence belongs to the krueppel C2H2-type zinc-finger protein family.

The protein localises to the nucleus. In terms of biological role, may be involved in transcriptional regulation. This Mus musculus (Mouse) protein is Zinc finger protein 574 (Znf574).